Reading from the N-terminus, the 285-residue chain is RING finger protein 223 (285 aa).

The RING-type zinc-finger motif lies at 81 to 132 (CSICFSGYDNIFKTPKELSCSHVFCLECLARLAAAQPAGRSGREAVPCPFCR). A helical transmembrane segment spans residues 230–250 (VALVSVLLLVLFCVILWPVQC).

It is found in the membrane. The protein is RING finger protein 223 (Rnf223) of Mus musculus (Mouse).